A 478-amino-acid polypeptide reads, in one-letter code: Early growth response protein 4 (478 aa).

The interval 275–302 (TEGLPALLTPPGGEGGSGGEGGEFLAAP) is disordered. Residues 286-296 (GGEGGSGGEGG) are compositionally biased toward gly residues. 3 C2H2-type zinc fingers span residues 372–396 (FACPVESCVRSFARSDELNRHLRIH), 402–424 (FQCRICLRNFSRSDHLTTHVRTH), and 430–452 (FACDVCGRRFARSDEKKRHSKVH).

This sequence belongs to the EGR C2H2-type zinc-finger protein family.

It is found in the nucleus. In terms of biological role, transcriptional regulator. Recognizes and binds to the DNA sequence 5'-GCGGGGGCG-3' (GSG). Activates the transcription of target genes whose products are required for mitogenesis and differentiation. This chain is Early growth response protein 4 (Egr4), found in Mus musculus (Mouse).